Here is a 148-residue protein sequence, read N- to C-terminus: Small ribosomal subunit protein eS12B (148 aa).

The protein belongs to the eukaryotic ribosomal protein eS12 family. Component of the small ribosomal subunit (SSU). Mature yeast ribosomes consist of a small (40S) and a large (60S) subunit. The 40S small subunit contains 1 molecule of ribosomal RNA (18S rRNA) and at least 33 different proteins. The large 60S subunit contains 3 rRNA molecules (25S, 5.8S and 5S rRNA) and at least 46 different proteins.

Its subcellular location is the cytoplasm. Component of the ribosome, a large ribonucleoprotein complex responsible for the synthesis of proteins in the cell. The small ribosomal subunit (SSU) binds messenger RNAs (mRNAs) and translates the encoded message by selecting cognate aminoacyl-transfer RNA (tRNA) molecules. The large subunit (LSU) contains the ribosomal catalytic site termed the peptidyl transferase center (PTC), which catalyzes the formation of peptide bonds, thereby polymerizing the amino acids delivered by tRNAs into a polypeptide chain. The nascent polypeptides leave the ribosome through a tunnel in the LSU and interact with protein factors that function in enzymatic processing, targeting, and the membrane insertion of nascent chains at the exit of the ribosomal tunnel. The chain is Small ribosomal subunit protein eS12B (rps1202) from Schizosaccharomyces pombe (strain 972 / ATCC 24843) (Fission yeast).